The following is a 268-amino-acid chain: Enoyl-[acyl-carrier-protein] reductase [NADH] 2 (268 aa).

NAD(+) is bound by residues G14, 20–21 (SI), Q41, 65–66 (DV), and I93. Active-site proton acceptor residues include Y146 and Y156. NAD(+) is bound by residues K163 and 192 to 196 (IRTLA).

It belongs to the short-chain dehydrogenases/reductases (SDR) family. FabI subfamily.

Its subcellular location is the cell inner membrane. The enzyme catalyses a 2,3-saturated acyl-[ACP] + NAD(+) = a (2E)-enoyl-[ACP] + NADH + H(+). The protein operates within lipid metabolism; fatty acid biosynthesis. In Rhizobium meliloti (strain 1021) (Ensifer meliloti), this protein is Enoyl-[acyl-carrier-protein] reductase [NADH] 2 (fabI2).